The sequence spans 316 residues: Apolipoprotein E (316 aa).

The N-terminal stretch at Met-1–Ala-18 is a signal peptide. 8 repeat units span residues Ala-83–Gly-104, Pro-105–Gly-126, Ala-127–Gly-148, Gln-149–Leu-170, Arg-171–Ala-192, Arg-193–Thr-214, Leu-215–Arg-232, and Gly-233–Gln-254. Positions Ala-83–Gln-254 are 8 X 22 AA approximate tandem repeats. Positions His-161 to Arg-171 are LDL and other lipoprotein receptors binding. Leu-165–Arg-168 is a binding site for heparin. A lipid-binding and lipoprotein association region spans residues His-213–Met-289. A heparin-binding site is contributed by Ala-228–Leu-235. Positions Asn-265 to Gln-316 are homooligomerization. Residues Arg-277 to Met-289 form a specificity for association with VLDL region.

It belongs to the apolipoprotein A1/A4/E family. Homotetramer. May interact with ABCA1; functionally associated with ABCA1 in the biogenesis of HDLs. May interact with APP/A4 amyloid-beta peptide; the interaction is extremely stable in vitro but its physiological significance is unclear. May interact with MAPT. May interact with MAP2. In the cerebrospinal fluid, interacts with secreted SORL1. Interacts with PMEL; this allows the loading of PMEL luminal fragment on ILVs to induce fibril nucleation. APOE exists as multiple glycosylated and sialylated glycoforms within cells and in plasma. The extent of glycosylation and sialylation are tissue and context specific. Post-translationally, glycated in plasma VLDL. In terms of processing, phosphorylated by FAM20C in the extracellular medium.

It localises to the secreted. The protein localises to the extracellular space. Its subcellular location is the extracellular matrix. It is found in the extracellular vesicle. The protein resides in the endosome. It localises to the multivesicular body. In terms of biological role, APOE is an apolipoprotein, a protein associating with lipid particles, that mainly functions in lipoprotein-mediated lipid transport between organs via the plasma and interstitial fluids. APOE is a core component of plasma lipoproteins and is involved in their production, conversion and clearance. Apolipoproteins are amphipathic molecules that interact both with lipids of the lipoprotein particle core and the aqueous environment of the plasma. As such, APOE associates with chylomicrons, chylomicron remnants, very low density lipoproteins (VLDL) and intermediate density lipoproteins (IDL) but shows a preferential binding to high-density lipoproteins (HDL). It also binds a wide range of cellular receptors including the LDL receptor/LDLR and the very low-density lipoprotein receptor/VLDLR that mediate the cellular uptake of the APOE-containing lipoprotein particles. Finally, APOE also has a heparin-binding activity and binds heparan-sulfate proteoglycans on the surface of cells, a property that supports the capture and the receptor-mediated uptake of APOE-containing lipoproteins by cells. This is Apolipoprotein E (APOE) from Diceros bicornis (Black rhinoceros).